Consider the following 838-residue polypeptide: Shutoff protein (838 aa).

The interval 1–102 is disordered; that stretch reads MEDQHSAASE…EQEEDSPDRY (102 aa). Over residues 18-35 the composition is skewed to pro residues; it reads TLPPPPPPPPPPTSPPPS. Residues 52–65 are compositionally biased toward low complexity; that stretch reads TCSSSSSSSASSEC. The segment at 291-353 is binding to host EIF4G; the sequence is LMQTLLVRRA…ACMVTVQLHC (63 aa). One can recognise an RRM domain in the interval 356-474; that stretch reads TFLTSREMVR…SLWTGFDERT (119 aa). Y373 and Y690 each carry phosphotyrosine; by host. The segment at 693–838 is disordered; the sequence is PHTGEELNTA…QELRRPQRGS (146 aa). Residues 701-710 show a composition bias toward low complexity; it reads TAAPSTAHHA. 2 stretches are compositionally biased toward basic and acidic residues: residues 737-746 and 770-787; these read SYADRVRSEL and HSRDAARRRGSQQRDQRQ. Low complexity predominate over residues 813–829; that stretch reads QALLHQQQQQQEHQPAQ.

The protein belongs to the adenoviridae shutoff protein family. In terms of assembly, monomer. Interacts with hexon protein; this interaction allows chaperoning and trimerization of hexon proteins. Interacts (via N-terminus) with host initiation factor EIF4G (via C-terminus). Interacts (via RRM domain) with viral mRNAs that contain the tripartite leader; this interaction allows ribosome shunting and expression of viral late mRNAs. Might be cleaved by the viral protease. In terms of processing, phosphorylated. Tyrosine phosphorylation enhances preferential binding to tripartite leader mRNAs and allows ribosome shunting. Post-translationally, methylated. Asymmetric dimethylation by host PRMT1 of the Arg/Gly-rich region may regulate shutoff protein binding to hexon and promote the capsid assembly in the nucleus.

The protein localises to the host cytoplasm. Functionally, protein that inhibits host translation while promoting late viral translation by ribosome shunting. Blocks host cap-dependent translation by binding to eIF4G, displacing MKNK1 from cap initiation complexes and preventing EIF4E phosphorylation. Binds to the tripartite leader sequence of viral late mRNAs and recruits host eIF4G, PABPC1/poly-A binding protein and 40S ribosomes subunits on viral mRNAs, allowing ribosome shunting and efficient translation of late viral mRNAs even though conventional translation via ribosome scanning from the cap has been shut off in the host cell. During assembly, acts as a chaperone protein that helps hexon proteins assembly into trimers. This chain is Shutoff protein, found in Porcine adenovirus A serotype 3 (PAdV-3).